The sequence spans 237 residues: Ribonuclease PH (237 aa).

Residues arginine 86 and 124 to 126 (GTR) each bind phosphate.

It belongs to the RNase PH family. Homohexameric ring arranged as a trimer of dimers.

It catalyses the reaction tRNA(n+1) + phosphate = tRNA(n) + a ribonucleoside 5'-diphosphate. Its function is as follows. Phosphorolytic 3'-5' exoribonuclease that plays an important role in tRNA 3'-end maturation. Removes nucleotide residues following the 3'-CCA terminus of tRNAs; can also add nucleotides to the ends of RNA molecules by using nucleoside diphosphates as substrates, but this may not be physiologically important. Probably plays a role in initiation of 16S rRNA degradation (leading to ribosome degradation) during starvation. The protein is Ribonuclease PH of Shewanella denitrificans (strain OS217 / ATCC BAA-1090 / DSM 15013).